A 484-amino-acid polypeptide reads, in one-letter code: Vanillin dehydrogenase (484 aa).

Residues 156-157 (WN), 180-183 (KPAS), and 234-235 (GS) each bind NADP(+). Residues K180 and 234-239 (GSTPVG) each bind NAD(+). E258 acts as the Proton acceptor in catalysis. L259 lines the NADP(+) pocket. The Nucleophile role is filled by C292. NAD(+) is bound by residues Q339 and E386. E386 is an NADP(+) binding site.

The protein belongs to the aldehyde dehydrogenase family. In terms of assembly, exists as a homodimer, homotrimer and homotetramer.

The catalysed reaction is vanillin + NAD(+) + H2O = vanillate + NADH + 2 H(+). The enzyme catalyses vanillin + NADP(+) + H2O = vanillate + NADPH + 2 H(+). It carries out the reaction 3,4-dihydroxybenzaldehyde + NAD(+) + H2O = 3,4-dihydroxybenzoate + NADH + 2 H(+). It catalyses the reaction 3,4-dihydroxybenzaldehyde + NADP(+) + H2O = 3,4-dihydroxybenzoate + NADPH + 2 H(+). The catalysed reaction is 4-hydroxybenzaldehyde + NAD(+) + H2O = 4-hydroxybenzoate + NADH + 2 H(+). The enzyme catalyses 4-hydroxybenzaldehyde + NADP(+) + H2O = 4-hydroxybenzoate + NADPH + 2 H(+). Functionally, catalyzes oxidation of vanillin to vanillate. Also oxidizes 3,4-dihydroxybenzaldehyde and 4-hydroxybenzaldehyde significantly. Other aromatic aldehyde substrates in the order of decreasing activity include 3-hydroxybenzaldehyde, 4-nitrobenzaldehyde, terephthalaldehyde, 2,4-dichlorobenzaldehyde, benzaldehyde and 3-phenylpropanal. Low activity with phthalaldehyde, cinnamaldehyde and syringaldehyde. No activity with phenylacetaldehyde, formaldehyde or aldehyde. Active with both NAD(+) and NADP(+). Involved in the degradation pathway of lignin-derived aromatic compounds of plant cell walls. Catalyzes the conversion of vanillin to vanillate due to toxicity of vanillin to the cells. In Corynebacterium glutamicum (strain ATCC 13032 / DSM 20300 / JCM 1318 / BCRC 11384 / CCUG 27702 / LMG 3730 / NBRC 12168 / NCIMB 10025 / NRRL B-2784 / 534), this protein is Vanillin dehydrogenase.